The chain runs to 311 residues: tRNA dimethylallyltransferase (311 aa).

Residue 13–20 (GPTASGKT) participates in ATP binding. 15–20 (TASGKT) is a binding site for substrate. Interaction with substrate tRNA stretches follow at residues 38-41 (DSMQ) and 166-170 (QRVLR).

The protein belongs to the IPP transferase family. As to quaternary structure, monomer. Mg(2+) serves as cofactor.

It catalyses the reaction adenosine(37) in tRNA + dimethylallyl diphosphate = N(6)-dimethylallyladenosine(37) in tRNA + diphosphate. Catalyzes the transfer of a dimethylallyl group onto the adenine at position 37 in tRNAs that read codons beginning with uridine, leading to the formation of N6-(dimethylallyl)adenosine (i(6)A). The protein is tRNA dimethylallyltransferase of Staphylococcus aureus (strain Mu3 / ATCC 700698).